The following is a 513-amino-acid chain: 2-isopropylmalate synthase (513 aa).

The Pyruvate carboxyltransferase domain maps to 5-268 (LIIFDTTLRD…DVGIDTTQIV (264 aa)). Residues Asp14, His202, His204, and Asn239 each coordinate Mn(2+). The regulatory domain stretch occupies residues 394-513 (RFISLSQRSE…KAVQKINPQI (120 aa)).

It belongs to the alpha-IPM synthase/homocitrate synthase family. LeuA type 1 subfamily. Homodimer. Mn(2+) is required as a cofactor.

The protein localises to the cytoplasm. It carries out the reaction 3-methyl-2-oxobutanoate + acetyl-CoA + H2O = (2S)-2-isopropylmalate + CoA + H(+). The protein operates within amino-acid biosynthesis; L-leucine biosynthesis; L-leucine from 3-methyl-2-oxobutanoate: step 1/4. Catalyzes the condensation of the acetyl group of acetyl-CoA with 3-methyl-2-oxobutanoate (2-ketoisovalerate) to form 3-carboxy-3-hydroxy-4-methylpentanoate (2-isopropylmalate). This chain is 2-isopropylmalate synthase, found in Cupriavidus metallidurans (strain ATCC 43123 / DSM 2839 / NBRC 102507 / CH34) (Ralstonia metallidurans).